Reading from the N-terminus, the 105-residue chain is Putative RNA-binding protein RbpF (105 aa).

Residues 2–79 (SIYVGNLSYE…RDLKVNKAKP (78 aa)) enclose the RRM domain. The segment covering 75–84 (NKAKPKEDRG) has biased composition (basic and acidic residues). Positions 75–105 (NKAKPKEDRGSFGGGNRGGYGGGGGGGRSRY) are disordered. Residues 85–105 (SFGGGNRGGYGGGGGGGRSRY) show a composition bias toward gly residues.

The protein is Putative RNA-binding protein RbpF (rbpF) of Nostoc sp. (strain PCC 7120 / SAG 25.82 / UTEX 2576).